A 64-amino-acid chain; its full sequence is Large ribosomal subunit protein bL35 (64 aa).

Belongs to the bacterial ribosomal protein bL35 family.

The polypeptide is Large ribosomal subunit protein bL35 (Colwellia psychrerythraea (strain 34H / ATCC BAA-681) (Vibrio psychroerythus)).